The following is a 202-amino-acid chain: UPF0301 protein Meso_0753 (202 aa).

Belongs to the UPF0301 (AlgH) family.

The protein is UPF0301 protein Meso_0753 of Chelativorans sp. (strain BNC1).